A 337-amino-acid chain; its full sequence is Glycerol-3-phosphate dehydrogenase [NAD(P)+] (337 aa).

2 residues coordinate NADPH: W12 and K107. K107, G138, and T140 together coordinate sn-glycerol 3-phosphate. A142 is a binding site for NADPH. K193, D246, S256, R257, and N258 together coordinate sn-glycerol 3-phosphate. K193 serves as the catalytic Proton acceptor. Position 257 (R257) interacts with NADPH. Positions 282 and 284 each coordinate NADPH.

The protein belongs to the NAD-dependent glycerol-3-phosphate dehydrogenase family.

It is found in the cytoplasm. It catalyses the reaction sn-glycerol 3-phosphate + NAD(+) = dihydroxyacetone phosphate + NADH + H(+). The enzyme catalyses sn-glycerol 3-phosphate + NADP(+) = dihydroxyacetone phosphate + NADPH + H(+). The protein operates within membrane lipid metabolism; glycerophospholipid metabolism. Functionally, catalyzes the reduction of the glycolytic intermediate dihydroxyacetone phosphate (DHAP) to sn-glycerol 3-phosphate (G3P), the key precursor for phospholipid synthesis. This Koribacter versatilis (strain Ellin345) protein is Glycerol-3-phosphate dehydrogenase [NAD(P)+].